The primary structure comprises 1189 residues: Tyrosine-protein phosphatase non-receptor type 14 (1189 aa).

The FERM domain maps to 21-306; the sequence is FVTRIRLLDS…TRHKFYKQNK (286 aa). A phosphoserine mark is found at S314, S461, S486, S591, S593, S594, and S646. The interval 744-775 is disordered; the sequence is ARIPNRPPPEYPGPRKSVSNGALRQDQGTPLP. Polar residues predominate over residues 760–771; that stretch reads SVSNGALRQDQG. Phosphoserine is present on S833. The 272-residue stretch at 911-1182 folds into the Tyrosine-protein phosphatase domain; that stretch reads VFTEYEQIPN…KFVYQVLVQF (272 aa). C1123 serves as the catalytic Phosphocysteine intermediate. Residues 1123 to 1129 and Q1167 contribute to the substrate site; that span reads CSAGVGR.

The protein belongs to the protein-tyrosine phosphatase family. Non-receptor class subfamily. As to quaternary structure, interacts with FLT4; the interaction is enhanced by stimulation with VEGFC. Interacts (via PPxY motifs) with YAP1 (via WW domains); this interaction leads to the cytoplasmic sequestration of YAP1 and inhibits its transcriptional coactivator activity. In terms of processing, ubiquitinated by the ECS (Elongin BC-CUL2/5-SOCS-box protein)/LRR1 E3 ligase complex and subsequently targeted to proteasomal degradation. Thymus; in cells of both hematopoietic and non-hematopoietic origins.

It is found in the cytoplasm. The protein resides in the cytoskeleton. Its subcellular location is the nucleus. The catalysed reaction is O-phospho-L-tyrosyl-[protein] + H2O = L-tyrosyl-[protein] + phosphate. Its function is as follows. Protein tyrosine phosphatase which may play a role in the regulation of lymphangiogenesis, cell-cell adhesion, cell-matrix adhesion, cell migration, cell growth and also regulates TGF-beta gene expression, thereby modulating epithelial-mesenchymal transition. Mediates beta-catenin dephosphorylation at adhesion junctions. Acts as a negative regulator of the oncogenic property of YAP, a downstream target of the hippo pathway, in a cell density-dependent manner. May function as a tumor suppressor. This chain is Tyrosine-protein phosphatase non-receptor type 14 (Ptpn14), found in Mus musculus (Mouse).